The chain runs to 165 residues: ATP synthase subunit b (165 aa).

A helical transmembrane segment spans residues 7 to 27; it reads GTSLGNLLIVTGSFILLLLLV.

It belongs to the ATPase B chain family. As to quaternary structure, F-type ATPases have 2 components, F(1) - the catalytic core - and F(0) - the membrane proton channel. F(1) has five subunits: alpha(3), beta(3), gamma(1), delta(1), epsilon(1). F(0) has three main subunits: a(1), b(2) and c(10-14). The alpha and beta chains form an alternating ring which encloses part of the gamma chain. F(1) is attached to F(0) by a central stalk formed by the gamma and epsilon chains, while a peripheral stalk is formed by the delta and b chains.

It localises to the cell membrane. F(1)F(0) ATP synthase produces ATP from ADP in the presence of a proton or sodium gradient. F-type ATPases consist of two structural domains, F(1) containing the extramembraneous catalytic core and F(0) containing the membrane proton channel, linked together by a central stalk and a peripheral stalk. During catalysis, ATP synthesis in the catalytic domain of F(1) is coupled via a rotary mechanism of the central stalk subunits to proton translocation. In terms of biological role, component of the F(0) channel, it forms part of the peripheral stalk, linking F(1) to F(0). In Streptococcus mutans serotype c (strain ATCC 700610 / UA159), this protein is ATP synthase subunit b.